The sequence spans 264 residues: 3-methyl-2-oxobutanoate hydroxymethyltransferase (264 aa).

Aspartate 45 and aspartate 84 together coordinate Mg(2+). 3-methyl-2-oxobutanoate contacts are provided by residues 45 to 46 (DS), aspartate 84, and lysine 112. Mg(2+) is bound at residue glutamate 114. Catalysis depends on glutamate 181, which acts as the Proton acceptor.

This sequence belongs to the PanB family. In terms of assembly, homodecamer; pentamer of dimers. Mg(2+) is required as a cofactor.

Its subcellular location is the cytoplasm. The catalysed reaction is 3-methyl-2-oxobutanoate + (6R)-5,10-methylene-5,6,7,8-tetrahydrofolate + H2O = 2-dehydropantoate + (6S)-5,6,7,8-tetrahydrofolate. The protein operates within cofactor biosynthesis; (R)-pantothenate biosynthesis; (R)-pantoate from 3-methyl-2-oxobutanoate: step 1/2. Its function is as follows. Catalyzes the reversible reaction in which hydroxymethyl group from 5,10-methylenetetrahydrofolate is transferred onto alpha-ketoisovalerate to form ketopantoate. The protein is 3-methyl-2-oxobutanoate hydroxymethyltransferase of Vibrio campbellii (strain ATCC BAA-1116).